The chain runs to 399 residues: MARRLQDELSAFFFEYDTPRMVLVRNKKVGVIFRLIQLVVLVYVIGWVFVYEKGYQTSSGLISSVSVKLKGLAVTQLQGLGPQVWDVADYVFPAHGDSSFVVMTNFIMTPQQAQGHCAENPEGGICQDDSGCTPGKAERKAQGIRTGNCVPFNGTVKTCEIFGWCPVEVDDKIPSPALLHEAENFTLFIKNSISFPRFKVNRRNLVEEVNGTYMKKCLYHKILHPLCPVFSLGYVVRESGQDFRSLAEKGGVVGITIDWECDLDWHVRHCKPIYQFHGLYGEKNLSPGFNFRFARHFVQNGTNRRHLFKVFGIRFDILVDGKAGKFDIIPTMTTIGSGIGIFGVATVLCDLLLLHILPKRHYYKQKKFKYAEDMGPGEGERDPAATSSTLGLQENMRTS.

Residues 1–28 (MARRLQDELSAFFFEYDTPRMVLVRNKK) lie on the Cytoplasmic side of the membrane. Residues 29 to 50 (VGVIFRLIQLVVLVYVIGWVFV) traverse the membrane as a helical segment. At 51–338 (YEKGYQTSSG…IPTMTTIGSG (288 aa)) the chain is on the extracellular side. CTP-binding residues include lysine 68, lysine 70, and lysine 140. ATP is bound at residue lysine 70. 3 disulfide bridges follow: cysteine 117/cysteine 165, cysteine 126/cysteine 149, and cysteine 132/cysteine 159. Residues asparagine 153 and asparagine 184 are each glycosylated (N-linked (GlcNAc...) asparagine). Threonine 186 lines the CTP pocket. Threonine 186 lines the ATP pocket. Residue asparagine 210 is glycosylated (N-linked (GlcNAc...) asparagine). Intrachain disulfides connect cysteine 217/cysteine 227 and cysteine 261/cysteine 270. Residues serine 286, asparagine 290, and arginine 292 each contribute to the ATP site. The CTP site is built by asparagine 290 and arginine 292. The N-linked (GlcNAc...) asparagine glycan is linked to asparagine 300. A CTP-binding site is contributed by lysine 309. Lysine 309 contacts ATP. A pore-forming motif region spans residues 331–338 (TMTTIGSG). The chain crosses the membrane as a helical span at residues 339–358 (IGIFGVATVLCDLLLLHILP). Residues 359–399 (KRHYYKQKKFKYAEDMGPGEGERDPAATSSTLGLQENMRTS) are Cytoplasmic-facing. The tract at residues 374–399 (MGPGEGERDPAATSSTLGLQENMRTS) is disordered. The segment covering 385-399 (ATSSTLGLQENMRTS) has biased composition (polar residues). Phosphoserine is present on residues serine 387 and serine 388. Position 389 is a phosphothreonine (threonine 389).

Belongs to the P2X receptor family. In terms of assembly, functional P2XRs are organized as homomeric and heteromeric trimers. Forms heterodimer with P2RX2. Forms heterodimer with P2RX4. Forms heterodimer with P2RX5. As to expression, expressed in smooth muscle of the bladder and arteries.

It localises to the cell membrane. The catalysed reaction is Ca(2+)(in) = Ca(2+)(out). It carries out the reaction K(+)(in) = K(+)(out). It catalyses the reaction Na(+)(in) = Na(+)(out). Activated by low concentrations of ATP (&lt;1 uM). Undergoes rapid desensitisation. Sensitives to the ATP agonist:alpha/beta-methylene-ATP. Modulated by cholesterol. Functionally, ATP-gated nonselective transmembrane cation channel permeable to potassium, sodium and with relatively high calcium permeability. Furthermore, CTP functions as a weak affinity agonist for P2RX1. Plays a role in male fertility, bladder contraction and platelet aggregation. Specifically, plays an important role in neurogenic contraction of smooth muscle of the vas deferens, and therefore is essential for normal male reproductive function. In addition, contributes to smooth muscle contractions of the urinary bladder. On platelets, contributes to platelet activation and aggregation and thereby, also to thrombosis. On neutrophils, it is involved in chemotaxis and in mitigating the activation of circulating cells. The chain is P2X purinoceptor 1 (P2rx1) from Mus musculus (Mouse).